Consider the following 152-residue polypeptide: Probable histone H2A.3 (152 aa).

Disordered stretches follow at residues 1-25 (MDAS…KKSV) and 129-152 (KTER…PKKA). Residues 7 to 25 (TTKKGAGGRKGGGPRKKSV) show a composition bias toward basic residues. Over residues 129 to 142 (KTERANTGGKEPKT) the composition is skewed to basic and acidic residues. An SPKK motif motif is present at residues 148–151 (SPKK).

This sequence belongs to the histone H2A family. In terms of assembly, the nucleosome is a histone octamer containing two molecules each of H2A, H2B, H3 and H4 assembled in one H3-H4 heterotetramer and two H2A-H2B heterodimers. The octamer wraps approximately 147 bp of DNA.

The protein resides in the nucleus. Its subcellular location is the chromosome. In terms of biological role, core component of nucleosome. Nucleosomes wrap and compact DNA into chromatin, limiting DNA accessibility to the cellular machineries which require DNA as a template. Histones thereby play a central role in transcription regulation, DNA repair, DNA replication and chromosomal stability. DNA accessibility is regulated via a complex set of post-translational modifications of histones, also called histone code, and nucleosome remodeling. In Medicago truncatula (Barrel medic), this protein is Probable histone H2A.3.